We begin with the raw amino-acid sequence, 276 residues long: F-actin-capping protein subunit beta (276 aa).

This sequence belongs to the F-actin-capping protein beta subunit family. As to quaternary structure, component of the F-actin capping complex, composed of a heterodimer of an alpha and a beta subunit. Subunit of dynactin, a multiprotein complex part of a tripartite complex with dynein and a adapter, such as BICDL1, BICD2 or HOOK3.

It localises to the cytoplasm. It is found in the cytoskeleton. F-actin-capping proteins bind in a Ca(2+)-independent manner to the fast growing ends of actin filaments (barbed end) thereby blocking the exchange of subunits at these ends. Unlike other capping proteins (such as gelsolin and severin), these proteins do not sever actin filaments. Forms, with CAPZB, the barbed end of the fast growing ends of actin filaments in the dynactin complex and stabilizes dynactin structure. The dynactin multiprotein complex activates the molecular motor dynein for ultra-processive transport along microtubules. This Drosophila melanogaster (Fruit fly) protein is F-actin-capping protein subunit beta (cpb).